The sequence spans 514 residues: MSCPIDKRRTLIAFLRRLRDLGQPPRSVTSKASASRAPKEVPLCPLMTDGETRNVTSLPGPTNWPLLGSLLEIFWKGGLKKQHDTLAEYHKKYGQIFRMKLGSFDSVHLGSPSLLEALYRTESAHPQRLEIKPWKAYRDHRNEAYGLMILEGQEWQRVRSAFQKKLMKPVEIMKLDKKINEVLADFLERMDELCDERGRIPDLYSELNKWSFESICLVLYEKRFGLLQKETEEEALTFITAIKTMMSTFGKMMVTPVELHKRLNTKVWQAHTLAWDTIFKSVKPCIDNRLQRYSQQPGADFLCDIYQQDHLSKKELYAAVTELQLAAVETTANSLMWILYNLSRNPQAQRRLLQEVQSVLPDNQTPRAEDLRNMPYLKACLKESMRLTPSVPFTTRTLDKPTVLGEYALPKGTVLTLNTQVLGSSEDNFEDSHKFRPERWLQKEKKINPFAHLPFGIGKRMCIGRRLAELQLHLALCWIIQKYDIVATDNEPVEMLHLGILVPSRELPIAFRPR.

A mitochondrion-targeting transit peptide spans 1-35; sequence MSCPIDKRRTLIAFLRRLRDLGQPPRSVTSKASAS. C462 is a binding site for heme.

It belongs to the cytochrome P450 family. Heme serves as cofactor.

It is found in the mitochondrion. It carries out the reaction calcitriol + 2 reduced [adrenodoxin] + O2 + 2 H(+) = calcitetrol + 2 oxidized [adrenodoxin] + H2O. The enzyme catalyses calcitetrol + 2 reduced [adrenodoxin] + O2 + 2 H(+) = (1S)-1,25-dihydroxy-24-oxocalciol + 2 oxidized [adrenodoxin] + 2 H2O. It catalyses the reaction (1S)-1,25-dihydroxy-24-oxocalciol + 2 reduced [adrenodoxin] + O2 + 2 H(+) = (1S)-1,23,25-trihydroxy-24-oxocalciol + 2 oxidized [adrenodoxin] + H2O. The catalysed reaction is (1S)-1,23-dihydroxy-24,25,26,27-tetranorcalciol + 2 reduced [adrenodoxin] + O2 + 2 H(+) = (1S)-1-hydroxy-23-oxo-24,25,26,27-tetranorcalciol + 2 oxidized [adrenodoxin] + 2 H2O. It carries out the reaction (1S)-1-hydroxy-23-oxo-24,25,26,27-tetranorcalciol + 2 reduced [adrenodoxin] + O2 + H(+) = calcitroate + 2 oxidized [adrenodoxin] + H2O. The enzyme catalyses calcidiol + 2 reduced [adrenodoxin] + O2 + 2 H(+) = secalciferol + 2 oxidized [adrenodoxin] + H2O. It catalyses the reaction secalciferol + 2 reduced [adrenodoxin] + O2 + 2 H(+) = 25-hydroxy-24-oxocalciol + 2 oxidized [adrenodoxin] + 2 H2O. The catalysed reaction is 25-hydroxy-24-oxocalciol + 2 reduced [adrenodoxin] + O2 + 2 H(+) = 23S,25-dihydroxy-24-oxocholecalciferol + 2 oxidized [adrenodoxin] + H2O. It carries out the reaction 20S,23-dihydroxycholecalciferol + 2 reduced [adrenodoxin] + O2 + 2 H(+) = 20S,23,25-trihydroxycholecalciferol + 2 oxidized [adrenodoxin] + H2O. The enzyme catalyses 20S,23-dihydroxycholecalciferol + 2 reduced [adrenodoxin] + O2 + 2 H(+) = 20S,23,24-trihydroxycholecalciferol + 2 oxidized [adrenodoxin] + H2O. It catalyses the reaction 20S-hydroxycholecalciferol + 2 reduced [adrenodoxin] + O2 + 2 H(+) = 20S,25-dihydroxycholecalciferol + 2 oxidized [adrenodoxin] + H2O. The catalysed reaction is 20S-hydroxycholecalciferol + 2 reduced [adrenodoxin] + O2 + 2 H(+) = 20S,24S-dihydroxycholecalciferol + 2 oxidized [adrenodoxin] + H2O. It carries out the reaction 20S-hydroxycholecalciferol + 2 reduced [adrenodoxin] + O2 + 2 H(+) = 20S,24R-dihydroxycholecalciferol + 2 oxidized [adrenodoxin] + H2O. A cytochrome P450 monooxygenase with a key role in vitamin D catabolism and calcium homeostasis. Via C24-oxidation pathway, catalyzes the inactivation of both the vitamin D precursor calcidiol (25-hydroxyvitamin D(3)) and the active hormone calcitriol (1-alpha,25-dihydroxyvitamin D(3)). With initial hydroxylation at C-24 (via C24-oxidation pathway), performs a sequential 6-step oxidation of calcitriol leading to the formation of the biliary metabolite calcitroic acid. Hydroxylates at C-24 or C-25 other vitamin D active metabolites, such as CYP11A1-derived secosteroids 20S-hydroxycholecalciferol and 20S,23-dihydroxycholecalciferol. Mechanistically, uses molecular oxygen inserting one oxygen atom into a substrate, and reducing the second into a water molecule, with two electrons provided by NADPH via FDXR/adrenodoxin reductase and FDX1/adrenodoxin. The polypeptide is 1,25-dihydroxyvitamin D(3) 24-hydroxylase, mitochondrial (Cyp24a1) (Rattus norvegicus (Rat)).